The following is a 399-amino-acid chain: Ribose-phosphate pyrophosphokinase 2, chloroplastic (399 aa).

Residues 1–32 (MAAKAAALSSSPFVSSRRLSSPAASLRARTPR) constitute a chloroplast transit peptide. Residues D214, H216, D225, and D229 each contribute to the Mg(2+) site. A binding of phosphoribosylpyrophosphate region spans residues 299–314 (GKVAIMVDDMIDTAGT).

The protein belongs to the ribose-phosphate pyrophosphokinase family. It depends on Mg(2+) as a cofactor.

It localises to the plastid. Its subcellular location is the chloroplast. It carries out the reaction D-ribose 5-phosphate + ATP = 5-phospho-alpha-D-ribose 1-diphosphate + AMP + H(+). This Oryza sativa subsp. japonica (Rice) protein is Ribose-phosphate pyrophosphokinase 2, chloroplastic.